Reading from the N-terminus, the 369-residue chain is RNA-binding protein rnp24 (369 aa).

Disordered regions lie at residues 1–77, 200–219, and 304–369; these read MEPI…KKKE, TDFS…TASI, and RMRN…IKFD. Residues 105 to 206 enclose the RRM 1 domain; it reads WGIWVGNLSF…KSNTDFSGRP (102 aa). Positions 209-219 are enriched in polar residues; the sequence is PANTLSKTASI. The RRM 2 domain occupies 228-310; sequence SILFVGNLDF…RSKRMRNKSP (83 aa). Residues 325–341 show a composition bias toward basic and acidic residues; the sequence is QEDKPNFKRARKIDPRS. Over residues 346 to 357 the composition is skewed to low complexity; that stretch reads AALAKAQRSSAA.

The protein localises to the nucleus. This chain is RNA-binding protein rnp24 (rnp24), found in Schizosaccharomyces pombe (strain 972 / ATCC 24843) (Fission yeast).